The following is a 380-amino-acid chain: Queuine tRNA-ribosyltransferase (380 aa).

The Proton acceptor role is filled by D96. Substrate-binding positions include 96-100, D150, Q193, and G220; that span reads DSGGF. The RNA binding stretch occupies residues 251–257; the sequence is GVGAPDS. D270 functions as the Nucleophile in the catalytic mechanism. Positions 275-279 are RNA binding; important for wobble base 34 recognition; that stretch reads TRIAR. Residues C308, C310, C313, and H339 each coordinate Zn(2+).

The protein belongs to the queuine tRNA-ribosyltransferase family. In terms of assembly, homodimer. Within each dimer, one monomer is responsible for RNA recognition and catalysis, while the other monomer binds to the replacement base PreQ1. Zn(2+) serves as cofactor.

The catalysed reaction is 7-aminomethyl-7-carbaguanine + guanosine(34) in tRNA = 7-aminomethyl-7-carbaguanosine(34) in tRNA + guanine. It functions in the pathway tRNA modification; tRNA-queuosine biosynthesis. In terms of biological role, catalyzes the base-exchange of a guanine (G) residue with the queuine precursor 7-aminomethyl-7-deazaguanine (PreQ1) at position 34 (anticodon wobble position) in tRNAs with GU(N) anticodons (tRNA-Asp, -Asn, -His and -Tyr). Catalysis occurs through a double-displacement mechanism. The nucleophile active site attacks the C1' of nucleotide 34 to detach the guanine base from the RNA, forming a covalent enzyme-RNA intermediate. The proton acceptor active site deprotonates the incoming PreQ1, allowing a nucleophilic attack on the C1' of the ribose to form the product. After dissociation, two additional enzymatic reactions on the tRNA convert PreQ1 to queuine (Q), resulting in the hypermodified nucleoside queuosine (7-(((4,5-cis-dihydroxy-2-cyclopenten-1-yl)amino)methyl)-7-deazaguanosine). This is Queuine tRNA-ribosyltransferase from Streptococcus gordonii (strain Challis / ATCC 35105 / BCRC 15272 / CH1 / DL1 / V288).